We begin with the raw amino-acid sequence, 518 residues long: Glutamate--cysteine ligase (518 aa).

This sequence belongs to the glutamate--cysteine ligase type 1 family. Type 1 subfamily.

It carries out the reaction L-cysteine + L-glutamate + ATP = gamma-L-glutamyl-L-cysteine + ADP + phosphate + H(+). It participates in sulfur metabolism; glutathione biosynthesis; glutathione from L-cysteine and L-glutamate: step 1/2. This is Glutamate--cysteine ligase from Escherichia coli O8 (strain IAI1).